The primary structure comprises 184 residues: Holliday junction branch migration complex subunit RuvA (184 aa).

Residues 1–64 (MIKAIEGVVT…EDANLLYGFL (64 aa)) form a domain I region. Positions 65–134 (DANEQKMFEM…IAELSDTKLI (70 aa)) are domain II. Residues 134-137 (ISDE) are flexible linker. The tract at residues 138-184 (SVPSYQNEALLALEALGFKREKIVKILPDCKSENTSDLIKEALKKLG) is domain III.

Belongs to the RuvA family. Homotetramer. Forms an RuvA(8)-RuvB(12)-Holliday junction (HJ) complex. HJ DNA is sandwiched between 2 RuvA tetramers; dsDNA enters through RuvA and exits via RuvB. An RuvB hexamer assembles on each DNA strand where it exits the tetramer. Each RuvB hexamer is contacted by two RuvA subunits (via domain III) on 2 adjacent RuvB subunits; this complex drives branch migration. In the full resolvosome a probable DNA-RuvA(4)-RuvB(12)-RuvC(2) complex forms which resolves the HJ.

It localises to the cytoplasm. In terms of biological role, the RuvA-RuvB-RuvC complex processes Holliday junction (HJ) DNA during genetic recombination and DNA repair, while the RuvA-RuvB complex plays an important role in the rescue of blocked DNA replication forks via replication fork reversal (RFR). RuvA specifically binds to HJ cruciform DNA, conferring on it an open structure. The RuvB hexamer acts as an ATP-dependent pump, pulling dsDNA into and through the RuvAB complex. HJ branch migration allows RuvC to scan DNA until it finds its consensus sequence, where it cleaves and resolves the cruciform DNA. This is Holliday junction branch migration complex subunit RuvA from Campylobacter concisus (strain 13826).